We begin with the raw amino-acid sequence, 207 residues long: Urease accessory protein UreG (207 aa).

13-20 (GPVGSGKT) lines the GTP pocket.

It belongs to the SIMIBI class G3E GTPase family. UreG subfamily. In terms of assembly, homodimer. UreD, UreF and UreG form a complex that acts as a GTP-hydrolysis-dependent molecular chaperone, activating the urease apoprotein by helping to assemble the nickel containing metallocenter of UreC. The UreE protein probably delivers the nickel.

It is found in the cytoplasm. In terms of biological role, facilitates the functional incorporation of the urease nickel metallocenter. This process requires GTP hydrolysis, probably effectuated by UreG. This chain is Urease accessory protein UreG, found in Azoarcus sp. (strain BH72).